Reading from the N-terminus, the 271-residue chain is Oxamate carbamoyltransferase subunit AllH (271 aa).

The protein belongs to the AllH family. As to quaternary structure, the OXTCase is composed of 3 subunits, AllF, AllG and AllH. Mg(2+) is required as a cofactor.

It catalyses the reaction oxamate + carbamoyl phosphate = N-carbamoyl-2-oxoglycine + phosphate. Its pathway is nitrogen metabolism; (S)-allantoin degradation. Its function is as follows. Component of a carbamoyltransferase involved in the anaerobic nitrogen utilization via the assimilation of allantoin. Catalyzes the conversion of oxalurate (N-carbamoyl-2-oxoglycine) to oxamate and carbamoyl phosphate. The sequence is that of Oxamate carbamoyltransferase subunit AllH from Escherichia coli O157:H7.